The primary structure comprises 1040 residues: Multidrug resistance protein MdtB (1040 aa).

12 consecutive transmembrane segments (helical) span residues 25–45 (LLMV…PVSA), 347–367 (LMMA…NIPA), 369–389 (IIPG…MVFL), 396–416 (LTLM…IVVI), 440–460 (IGFT…PLLF), 472–492 (FAIT…TLTP), 537–557 (WLTL…WVFI), 863–883 (LGST…VLGI), 888–908 (FIHP…ALLA), 911–931 (IAGS…IGIV), 968–988 (ILMT…STGV), and 998–1018 (IGMV…TPVI).

The protein belongs to the resistance-nodulation-cell division (RND) (TC 2.A.6) family. MdtB subfamily. As to quaternary structure, part of a tripartite efflux system composed of MdtA, MdtB and MdtC. MdtB forms a heteromultimer with MdtC.

Its subcellular location is the cell inner membrane. The MdtABC tripartite complex confers resistance against novobiocin and deoxycholate. In Escherichia coli O127:H6 (strain E2348/69 / EPEC), this protein is Multidrug resistance protein MdtB.